We begin with the raw amino-acid sequence, 230 residues long: Cytochrome b6-f complex iron-sulfur subunit, chloroplastic (230 aa).

Over residues 1–16 (MASTTLSATPTPSQLS) the composition is skewed to low complexity. Residues 1–20 (MASTTLSATPTPSQLSAAKN) form a disordered region. Residues 1 to 56 (MASTTLSATPTPSQLSAAKNGAYSPSRALLGKTARGLYPEKEMVSRKVTCQATSIP) constitute a chloroplast transit peptide. A helical transmembrane segment spans residues 73-93 (LLGALSLPTAGMLIPYGAFFV). In terms of domain architecture, Rieske spans 116–212 (AAAWLKTHGP…CDISEEGKVV (97 aa)). Cys158, His160, Cys176, and His179 together coordinate [2Fe-2S] cluster. A disulfide bridge links Cys163 with Cys178.

It belongs to the Rieske iron-sulfur protein family. The 4 large subunits of the cytochrome b6-f complex are cytochrome b6, subunit IV (17 kDa polypeptide, petD), cytochrome f and the Rieske protein, while the 4 small subunits are petG, petL, petM and petN. The complex functions as a dimer. It depends on [2Fe-2S] cluster as a cofactor.

It localises to the plastid. The protein resides in the chloroplast thylakoid membrane. It carries out the reaction 2 oxidized [plastocyanin] + a plastoquinol + 2 H(+)(in) = 2 reduced [plastocyanin] + a plastoquinone + 4 H(+)(out). Its function is as follows. Component of the cytochrome b6-f complex, which mediates electron transfer between photosystem II (PSII) and photosystem I (PSI), cyclic electron flow around PSI, and state transitions. This chain is Cytochrome b6-f complex iron-sulfur subunit, chloroplastic (petC), found in Fritillaria agrestis (Stinkbells).